The primary structure comprises 374 residues: Queuine tRNA-ribosyltransferase (374 aa).

Asp92 functions as the Proton acceptor in the catalytic mechanism. Substrate is bound by residues 92–96 (DSGGY), Asp146, Gln193, and Gly220. Positions 251–257 (GVGKPDD) are RNA binding. Asp270 acts as the Nucleophile in catalysis. The tract at residues 275-279 (TRSGR) is RNA binding; important for wobble base 34 recognition. Zn(2+) is bound by residues Cys308, Cys310, Cys313, and His339.

Belongs to the queuine tRNA-ribosyltransferase family. As to quaternary structure, homodimer. Within each dimer, one monomer is responsible for RNA recognition and catalysis, while the other monomer binds to the replacement base PreQ1. The cofactor is Zn(2+).

It carries out the reaction 7-aminomethyl-7-carbaguanine + guanosine(34) in tRNA = 7-aminomethyl-7-carbaguanosine(34) in tRNA + guanine. It participates in tRNA modification; tRNA-queuosine biosynthesis. Its function is as follows. Catalyzes the base-exchange of a guanine (G) residue with the queuine precursor 7-aminomethyl-7-deazaguanine (PreQ1) at position 34 (anticodon wobble position) in tRNAs with GU(N) anticodons (tRNA-Asp, -Asn, -His and -Tyr). Catalysis occurs through a double-displacement mechanism. The nucleophile active site attacks the C1' of nucleotide 34 to detach the guanine base from the RNA, forming a covalent enzyme-RNA intermediate. The proton acceptor active site deprotonates the incoming PreQ1, allowing a nucleophilic attack on the C1' of the ribose to form the product. After dissociation, two additional enzymatic reactions on the tRNA convert PreQ1 to queuine (Q), resulting in the hypermodified nucleoside queuosine (7-(((4,5-cis-dihydroxy-2-cyclopenten-1-yl)amino)methyl)-7-deazaguanosine). The protein is Queuine tRNA-ribosyltransferase of Novosphingobium aromaticivorans (strain ATCC 700278 / DSM 12444 / CCUG 56034 / CIP 105152 / NBRC 16084 / F199).